The primary structure comprises 259 residues: uncharacterized protein (259 aa).

Transmembrane regions (helical) follow at residues 9 to 31, 84 to 106, 126 to 148, 153 to 175, 196 to 215, and 230 to 252; these read ILSV…LESL, LLGG…LQWF, FLIY…FVFG, SIVA…LEYV, HFIL…YIAA, and TFRA…SWLG.

Its subcellular location is the cell membrane. This is an uncharacterized protein from Archaeoglobus fulgidus (strain ATCC 49558 / DSM 4304 / JCM 9628 / NBRC 100126 / VC-16).